Reading from the N-terminus, the 1295-residue chain is Phosphoribosylformylglycinamidine synthase (1295 aa).

The interval 305 to 327 (WPGAATGSGGEIRDEGATGRGAK) is disordered. Residues 307-318 (GAATGSGGEIRD) and alanine 678 contribute to the ATP site. Residues glutamate 718, asparagine 722, and aspartate 884 each coordinate Mg(2+). Serine 886 is a binding site for ATP. Residues 1042–1295 (VAVLREQGVN…IFRNARKQLG (254 aa)) enclose the Glutamine amidotransferase type-1 domain. The active-site Nucleophile is cysteine 1135. Catalysis depends on residues histidine 1260 and glutamate 1262.

In the N-terminal section; belongs to the FGAMS family. In terms of assembly, monomer.

It localises to the cytoplasm. The enzyme catalyses N(2)-formyl-N(1)-(5-phospho-beta-D-ribosyl)glycinamide + L-glutamine + ATP + H2O = 2-formamido-N(1)-(5-O-phospho-beta-D-ribosyl)acetamidine + L-glutamate + ADP + phosphate + H(+). The protein operates within purine metabolism; IMP biosynthesis via de novo pathway; 5-amino-1-(5-phospho-D-ribosyl)imidazole from N(2)-formyl-N(1)-(5-phospho-D-ribosyl)glycinamide: step 1/2. Phosphoribosylformylglycinamidine synthase involved in the purines biosynthetic pathway. Catalyzes the ATP-dependent conversion of formylglycinamide ribonucleotide (FGAR) and glutamine to yield formylglycinamidine ribonucleotide (FGAM) and glutamate. This chain is Phosphoribosylformylglycinamidine synthase, found in Shigella sonnei (strain Ss046).